The chain runs to 417 residues: Magnesium-protoporphyrin IX monomethyl ester [oxidative] cyclase, chloroplastic (417 aa).

Residues 1–45 (MASAMELSLLNPAMHHYGIAAKTASHLPVVPARRASSGAVRFRVR) constitute a chloroplast transit peptide.

The protein belongs to the AcsF family. Fe cation serves as cofactor.

The protein localises to the plastid. The protein resides in the chloroplast membrane. It carries out the reaction Mg-protoporphyrin IX 13-monomethyl ester + 3 NADPH + 3 O2 + 2 H(+) = 3,8-divinyl protochlorophyllide a + 3 NADP(+) + 5 H2O. It functions in the pathway porphyrin-containing compound metabolism; chlorophyll biosynthesis. Catalyzes the formation of the isocyclic ring in chlorophyll biosynthesis. Mediates the cyclase reaction, which results in the formation of divinylprotochlorophyllide (Pchlide) characteristic of all chlorophylls from magnesium-protoporphyrin IX 13-monomethyl ester (MgPMME). This chain is Magnesium-protoporphyrin IX monomethyl ester [oxidative] cyclase, chloroplastic (CRD1), found in Hordeum vulgare (Barley).